Consider the following 639-residue polypeptide: Serine/threonine-protein phosphatase 2B catalytic subunit A1 (639 aa).

Residues Asp-120, His-122, and Asp-148 each contribute to the Fe cation site. Residues Asp-148 and Asn-180 each coordinate Zn(2+). Catalysis depends on His-181, which acts as the Proton donor. Residues His-229 and His-311 each coordinate Zn(2+). The segment covering 494 to 503 (KSDIENERLP) has biased composition (basic and acidic residues). Residues 494-602 (KSDIENERLP…PSTRRRSLEN (109 aa)) form a disordered region. Composition is skewed to low complexity over residues 515 to 527 (ASPS…PATP) and 546 to 572 (TPIS…GGPP).

The protein belongs to the PPP phosphatase family. PP-2B subfamily. As to quaternary structure, composed of two components (A and B), the A component is the catalytic subunit and the B component confers calcium sensitivity. It depends on Fe(3+) as a cofactor. Zn(2+) serves as cofactor.

The enzyme catalyses O-phospho-L-seryl-[protein] + H2O = L-seryl-[protein] + phosphate. It catalyses the reaction O-phospho-L-threonyl-[protein] + H2O = L-threonyl-[protein] + phosphate. Functionally, calcium-dependent, calmodulin-stimulated protein phosphatase. This subunit may have a role in the calmodulin activation of calcineurin. The chain is Serine/threonine-protein phosphatase 2B catalytic subunit A1 (CNA1) from Cryptococcus neoformans var. grubii serotype A (strain H99 / ATCC 208821 / CBS 10515 / FGSC 9487) (Filobasidiella neoformans var. grubii).